A 254-amino-acid polypeptide reads, in one-letter code: Zinc finger FYVE domain-containing protein 21 (254 aa).

The segment at 44 to 104 (DKECPRCMQC…QCAGCAPVSR (61 aa)) adopts an FYVE-type zinc-finger fold. Zn(2+) contacts are provided by Cys-50, Cys-53, Cys-66, Cys-69, Cys-74, Cys-77, Cys-96, and Cys-99. The tract at residues 107–254 (ADFYDRQLKL…AKLLYESRDQ (148 aa)) is PH-like.

In terms of assembly, interacts with PTK2/FAK1.

The protein resides in the cell junction. The protein localises to the focal adhesion. It is found in the cytoplasmic vesicle. Its subcellular location is the endosome. Its function is as follows. Plays a role in cell adhesion, and thereby in cell motility which requires repeated formation and disassembly of focal adhesions. Regulates microtubule-induced PTK2/FAK1 dephosphorylation, an event important for focal adhesion disassembly, as well as integrin beta-1/ITGB1 cell surface expression. This chain is Zinc finger FYVE domain-containing protein 21 (ZFYVE21), found in Bos taurus (Bovine).